A 284-amino-acid polypeptide reads, in one-letter code: Shikimate dehydrogenase (NADP(+)) (284 aa).

Shikimate-binding positions include S20–S22 and S67. Catalysis depends on K71, which acts as the Proton acceptor. D83 contacts NADP(+). Shikimate is bound by residues N92 and D107. NADP(+) contacts are provided by residues G129–A133 and I227. Y229 provides a ligand contact to shikimate. NADP(+) is bound at residue G250.

This sequence belongs to the shikimate dehydrogenase family. Homodimer.

It catalyses the reaction shikimate + NADP(+) = 3-dehydroshikimate + NADPH + H(+). Its pathway is metabolic intermediate biosynthesis; chorismate biosynthesis; chorismate from D-erythrose 4-phosphate and phosphoenolpyruvate: step 4/7. Involved in the biosynthesis of the chorismate, which leads to the biosynthesis of aromatic amino acids. Catalyzes the reversible NADPH linked reduction of 3-dehydroshikimate (DHSA) to yield shikimate (SA). The polypeptide is Shikimate dehydrogenase (NADP(+)) (Streptococcus pneumoniae serotype 2 (strain D39 / NCTC 7466)).